Here is a 214-residue protein sequence, read N- to C-terminus: MADS-box protein CMB2 (214 aa).

Positions R3–L58 constitute an MADS-box domain. Residues W84 to G174 form the K-box domain.

In flowers. Not found in vegetative tissues.

The protein localises to the nucleus. In Dianthus caryophyllus (Carnation), this protein is MADS-box protein CMB2 (CMB2).